A 366-amino-acid polypeptide reads, in one-letter code: Alanine racemase (366 aa).

Catalysis depends on Lys-33, which acts as the Proton acceptor; specific for D-alanine. Lys-33 is modified (N6-(pyridoxal phosphate)lysine). Residue Arg-129 coordinates substrate. Tyr-253 serves as the catalytic Proton acceptor; specific for L-alanine. Met-301 contacts substrate.

Belongs to the alanine racemase family. Requires pyridoxal 5'-phosphate as cofactor.

It carries out the reaction L-alanine = D-alanine. It participates in amino-acid biosynthesis; D-alanine biosynthesis; D-alanine from L-alanine: step 1/1. Its function is as follows. Catalyzes the interconversion of L-alanine and D-alanine. May also act on other amino acids. This Xanthomonas oryzae pv. oryzae (strain KACC10331 / KXO85) protein is Alanine racemase (alr).